Here is a 68-residue protein sequence, read N- to C-terminus: Non-disulfide-bridged peptide 5.6 (68 aa).

Positions 1 to 23 (MKTQVIIFIMAVVFLQLLSQSEA) are cleaved as a signal peptide. The propeptide occupies 37-68 (ELRNIDLDQFDDMFDEPEISAADMRFLQELLK).

The protein belongs to the non-disulfide-bridged peptide (NDBP) superfamily. Short antimicrobial peptide (group 4) family. Expressed by the venom gland.

It is found in the secreted. Its subcellular location is the target cell membrane. Functionally, antibacterial peptide with activity against both Gram-positive and Gram-negative bacteria probably by forming pores in the cell membrane. Also has weak hemolytic activity. Does not show antifungal activity. This Hoffmannihadrurus gertschi (Scorpion) protein is Non-disulfide-bridged peptide 5.6.